Consider the following 137-residue polypeptide: Gonadotropin subunit beta-1 (137 aa).

The first 24 residues, 1 to 24, serve as a signal peptide directing secretion; the sequence is MYCTHLRMLQLVVMATLWVTPVRA. 5 cysteine pairs are disulfide-bonded: Cys32–Cys78, Cys46–Cys93, Cys55–Cys108, Cys59–Cys110, and Cys113–Cys120. Asn36 is a glycosylation site (N-linked (GlcNAc...) asparagine).

The protein belongs to the glycoprotein hormones subunit beta family. In terms of assembly, heterodimer of an alpha and a beta chain.

Its subcellular location is the secreted. Its function is as follows. Involved in gametogenesis and steroidogenesis. The protein is Gonadotropin subunit beta-1 (cgba) of Coregonus autumnalis (Arctic cisco).